Here is a 67-residue protein sequence, read N- to C-terminus: UPF0434 protein Patl_1782 (67 aa).

This sequence belongs to the UPF0434 family.

The polypeptide is UPF0434 protein Patl_1782 (Pseudoalteromonas atlantica (strain T6c / ATCC BAA-1087)).